Here is a 327-residue protein sequence, read N- to C-terminus: Serpentine receptor class alpha-33 (327 aa).

The next 6 membrane-spanning stretches (helical) occupy residues 20-40 (FSVY…VLAI), 56-76 (LLIT…FLQN), 133-153 (FSHA…STVF), 186-206 (IIPY…LIIY), 227-247 (AVVS…LFCF), and 270-290 (IIGW…AVFL).

Belongs to the nematode receptor-like protein sra family.

It localises to the membrane. The chain is Serpentine receptor class alpha-33 (sra-33) from Caenorhabditis elegans.